Consider the following 150-residue polypeptide: Allograft inflammatory factor 1-like (150 aa).

At serine 2 the chain carries N-acetylserine. A Phosphoserine modification is found at serine 2. An EF-hand 1 domain is found at 47-82 (EKLTAFKEKYMEFDLNNEGEIDLMSLKRMMEKLGVP). 4 residues coordinate Ca(2+): aspartate 60, asparagine 62, glutamate 64, and glutamate 66. An EF-hand 2; degenerate domain is found at 83-117 (KTHLEMKKMISEVTGGVSDTISYRDFVNMMLGKRS). Positions 129-150 (KANESSPKPVGPPPERDIASLP) are disordered. A Phosphoserine modification is found at serine 134.

Homodimer (Potential). Monomer.

The protein resides in the cytoplasm. The protein localises to the cytoskeleton. It is found in the cell projection. It localises to the ruffle membrane. Its function is as follows. Actin-binding protein that promotes actin bundling. May neither bind calcium nor depend on calcium for function. The chain is Allograft inflammatory factor 1-like (AIF1L) from Homo sapiens (Human).